Consider the following 275-residue polypeptide: Thiazole synthase (275 aa).

The active-site Schiff-base intermediate with DXP is lysine 108. 1-deoxy-D-xylulose 5-phosphate contacts are provided by residues glycine 169, 196 to 197 (AG), and 218 to 219 (NT).

Belongs to the ThiG family. In terms of assembly, homotetramer. Forms heterodimers with either ThiH or ThiS.

It localises to the cytoplasm. The enzyme catalyses [ThiS sulfur-carrier protein]-C-terminal-Gly-aminoethanethioate + 2-iminoacetate + 1-deoxy-D-xylulose 5-phosphate = [ThiS sulfur-carrier protein]-C-terminal Gly-Gly + 2-[(2R,5Z)-2-carboxy-4-methylthiazol-5(2H)-ylidene]ethyl phosphate + 2 H2O + H(+). The protein operates within cofactor biosynthesis; thiamine diphosphate biosynthesis. In terms of biological role, catalyzes the rearrangement of 1-deoxy-D-xylulose 5-phosphate (DXP) to produce the thiazole phosphate moiety of thiamine. Sulfur is provided by the thiocarboxylate moiety of the carrier protein ThiS. In vitro, sulfur can be provided by H(2)S. This is Thiazole synthase from Ralstonia nicotianae (strain ATCC BAA-1114 / GMI1000) (Ralstonia solanacearum).